Here is a 146-residue protein sequence, read N- to C-terminus: Large ribosomal subunit protein uL15 (146 aa).

Residues 1-13 (MKLHELHSAEGSR) show a composition bias toward basic and acidic residues. The segment at 1-55 (MKLHELHSAEGSRRNRKRVGRGTSSGYGKTSGRGQKGQLARQGGHTRLGFEGGQM) is disordered. The segment covering 23-35 (TSSGYGKTSGRGQ) has biased composition (gly residues).

The protein belongs to the universal ribosomal protein uL15 family. In terms of assembly, part of the 50S ribosomal subunit.

Functionally, binds to the 23S rRNA. The sequence is that of Large ribosomal subunit protein uL15 from Lactobacillus acidophilus (strain ATCC 700396 / NCK56 / N2 / NCFM).